The chain runs to 269 residues: MHGLDDAQYLQQKAHNKRISEFRSSSNSGINVTVVLKYTNGVVQVYNWQGTEVIAGSLNRQLMKFPNYMNPDKHGRIEWPGEGVEHQHGLIRSNGGNGSYDIGAGDPYAMQFIVQGSVDWNATRLRFFGPDGSRWMPDDQGGASVRAGLLNAAEDIINSKMQPLYFCDRMAGKSYYVRFDDKYAPRFPTIGFEVYRYRVGATNEMGGESARTAVASLISFPTFSTAYVNEKVAVENFFQPRELVYQTAMGTPFEVRLVPMDRFVTETGI.

Major component of the virus occlusion bodies, which are large proteinaceous structures (polyhedra), that protect the virus from the outside environment for extended periods until they are ingested by insect larvae. This Euxoa scandens cypovirus (EsCPV) protein is Polyhedrin.